The sequence spans 686 residues: Homoaconitase, mitochondrial (686 aa).

Residues 1 to 17 constitute a mitochondrion transit peptide; that stretch reads MRVVRCVRRFSASRAVS. C337, C401, and C404 together coordinate [4Fe-4S] cluster.

The protein belongs to the aconitase/IPM isomerase family. Requires [4Fe-4S] cluster as cofactor.

It is found in the mitochondrion. The enzyme catalyses (2R,3S)-homoisocitrate = cis-homoaconitate + H2O. It functions in the pathway amino-acid biosynthesis; L-lysine biosynthesis via AAA pathway; L-alpha-aminoadipate from 2-oxoglutarate: step 3/5. Its function is as follows. Catalyzes the reversible hydration of cis-homoaconitate to (2R,3S)-homoisocitrate, a step in the alpha-aminoadipate pathway for lysine biosynthesis. The chain is Homoaconitase, mitochondrial (LYS4) from Eremothecium gossypii (strain ATCC 10895 / CBS 109.51 / FGSC 9923 / NRRL Y-1056) (Yeast).